A 356-amino-acid chain; its full sequence is Protein pelota homolog (356 aa).

Belongs to the eukaryotic release factor 1 family. Pelota subfamily. In terms of assembly, monomer. Requires a divalent metal cation as cofactor.

It is found in the cytoplasm. Functionally, may function in recognizing stalled ribosomes, interact with stem-loop structures in stalled mRNA molecules, and effect endonucleolytic cleavage of the mRNA. May play a role in the release non-functional ribosomes and degradation of damaged mRNAs. Has endoribonuclease activity. The protein is Protein pelota homolog of Pyrococcus furiosus (strain ATCC 43587 / DSM 3638 / JCM 8422 / Vc1).